A 130-amino-acid chain; its full sequence is MSQAQYAGTGRRKNAVARVRLVPGTGKITVNKKDVEEYIPHADLRLVINQPFAVTSTVGSYDVFVNVIGGGYAGQSGAIRHGIARALLQVDPDFRDSLKRAGLLTRDSRKVERKKPGLKKARKASQFSKR.

The segment at 106–130 is disordered; the sequence is RDSRKVERKKPGLKKARKASQFSKR. Basic residues predominate over residues 111-130; the sequence is VERKKPGLKKARKASQFSKR.

It belongs to the universal ribosomal protein uS9 family.

The chain is Small ribosomal subunit protein uS9 from Streptococcus pneumoniae (strain ATCC 700669 / Spain 23F-1).